Consider the following 760-residue polypeptide: MRTSPRRPLILKRRRLPLPVQNAPSETSEEEAKRSPAQPEPAPAQASQEVAESSSCKFPAGIKIINHPTTPNTQVVAIPSNADIQSIITALTAKGKESGTSGPNRFILISSGGPSSHPSQPQAHSSRDSKRAEVITETLGPKPAAKGVPVPKPPGAPPRQRQESYAGGEAAGCTLDNSLTNIQWLGKMSSDGLGPCSVKQELEEKENCHLEQNRVKVEEPSGVSTSWQDSVSERPPYSYMAMIQFAINSTERKRMTLKDIYTWIEDHFPYFKHIAKPGWKNSIRHNLSLHDMFVRETSANGKVSFWTIHPSANRHLTLDQVFKPLEPGSPQSPEHLESQQKRPNPELHRNVTIKTEIPLGARRKMKPLLPRVSSYLEPIQFPVNQSLVLQPSVKVPFRLAASLMSSELARHSKRVRIAPKVLLSSEGIAPLPATEPPKEEKPLLGGEGLLPLLPIQSIKEEEMQPEEDIAHLERPIKVESPPLEEWPSPCASLKEELSNSWEDSSCSPTPKPKKSYCGLKSPTRCVSEMLVTKRREKREVSRSRRKQHLQPPCLDEPDLFFPEDSSTFRPAVELLAESSEPAPHLSCPQEEGGPFKTPIKETLPVSSTPSKSVLSRDPESWRLTPPAKVGGLDFSPVRTPQGAFGLLPDSLGLMELNTTPLKSGPLFDSPRELLNSEPFDLASDPFGSPPPPHVEGPKPGSPELQIPSLSANRSLTEGLVLDTMNDSLSKILLDISFPGLEEDPLGPDNINWSQFIPELR.

Disordered regions lie at residues 1 to 54 and 95 to 167; these read MRTS…AESS and GKES…SYAG. Composition is skewed to low complexity over residues 43-54 and 110-124; these read PAQASQEVAESS and SSGGPSSHPSQPQAH. Basic and acidic residues predominate over residues 125 to 134; sequence SSRDSKRAEV. Residues 140–149 show a composition bias toward low complexity; that stretch reads GPKPAAKGVP. Glycyl lysine isopeptide (Lys-Gly) (interchain with G-Cter in SUMO2) cross-links involve residues Lys-199 and Lys-323. A DNA-binding region (fork-head) is located at residues 233 to 325; it reads ERPPYSYMAM…LTLDQVFKPL (93 aa). The disordered stretch occupies residues 323-348; that stretch reads KPLEPGSPQSPEHLESQQKRPNPELH. At Ser-329 the chain carries Phosphoserine. Basic and acidic residues predominate over residues 334 to 348; sequence EHLESQQKRPNPELH. Lys-354 participates in a covalent cross-link: Glycyl lysine isopeptide (Lys-Gly) (interchain with G-Cter in SUMO2). Residue Ser-374 is modified to Phosphoserine; by CHEK2. Glycyl lysine isopeptide (Lys-Gly) (interchain with G-Cter in SUMO2) cross-links involve residues Lys-420 and Lys-438. 3 disordered regions span residues 500-560, 577-635, and 660-709; these read SWED…PDLF, ESSE…LDFS, and PLKS…IPSL. The residue at position 521 (Ser-521) is a Phosphoserine. Basic and acidic residues predominate over residues 531-542; the sequence is VTKRREKREVSR. Over residues 604 to 613 the composition is skewed to polar residues; the sequence is PVSSTPSKSV. A Phosphothreonine; by CDK1 modification is found at Thr-608. The residue at position 624 (Thr-624) is a Phosphothreonine. Phosphoserine; by PLK1 is present on residues Ser-727 and Ser-736.

Post-translationally, phosphorylated in M (mitotic) phase. Phosphorylation by the checkpoint kinase CHEK2 in response to DNA damage increases the FOXM1 protein stability probably stimulating the transcription of genes involved in DNA repair. Phosphorylated by CDK1 in late S and G2 phases, creating docking sites for the POLO box domains of PLK1. Subsequently, PLK1 binds and phosphorylates FOXM1, leading to activation of transcriptional activity and subsequent enhanced expression of key mitotic regulators. Phosphorylated by GSK3B leading to ubiquitination and proteasomal degradation. Expressed in fetal heart, brain, liver, lung, kidney and limb, but only in adult thymus. Appears to be expressed only in adult organs containing proliferating/cycling cells or in response to growth factors.

It is found in the nucleus. In terms of biological role, transcription factor regulating the expression of cell cycle genes essential for DNA replication and mitosis. Plays a role in the control of cell proliferation. Also plays a role in DNA break repair, participating in the DNA damage checkpoint response. Promotes transcription of PHB2. The protein is Forkhead box protein M1 (Foxm1) of Mus musculus (Mouse).